A 647-amino-acid polypeptide reads, in one-letter code: Putative pre-mRNA-splicing factor ATP-dependent RNA helicase C20H4.09 (647 aa).

The Helicase ATP-binding domain maps to 35-199 (LYAVEQNQIT…FGQDKVCTMS (165 aa)). ATP is bound at residue 48–55 (GHTGCGKT). A DEAH box motif is present at residues 146–149 (DEVH). The region spanning 219-398 (YVDSAIETVI…PLVLFLKGLG (180 aa)) is the Helicase C-terminal domain.

The protein belongs to the DEAD box helicase family. DEAH subfamily.

The protein resides in the nucleus. It carries out the reaction ATP + H2O = ADP + phosphate + H(+). Functionally, pre-mRNA processing factor involved in disassembly of spliceosomes after the release of mature mRNA. In Schizosaccharomyces pombe (strain 972 / ATCC 24843) (Fission yeast), this protein is Putative pre-mRNA-splicing factor ATP-dependent RNA helicase C20H4.09.